Here is a 102-residue protein sequence, read N- to C-terminus: Pole-localizer protein TmaR (102 aa).

Residues 7–34 are a coiled coil; sequence IINQARRKNKLKRELQDNQKKIRDNQKR.

Belongs to the pole-localizer TmaR family.

It localises to the cytoplasm. In terms of biological role, pole-localizer protein involved in the regulation of several cellular processes. The polypeptide is Pole-localizer protein TmaR (Aliivibrio fischeri (strain ATCC 700601 / ES114) (Vibrio fischeri)).